A 445-amino-acid polypeptide reads, in one-letter code: Phosphoglucosamine mutase (445 aa).

The active-site Phosphoserine intermediate is the Ser-100. Positions 100, 240, 242, and 244 each coordinate Mg(2+). Residue Ser-100 is modified to Phosphoserine.

Belongs to the phosphohexose mutase family. The cofactor is Mg(2+). In terms of processing, activated by phosphorylation.

The enzyme catalyses alpha-D-glucosamine 1-phosphate = D-glucosamine 6-phosphate. Catalyzes the conversion of glucosamine-6-phosphate to glucosamine-1-phosphate. In Pelotomaculum thermopropionicum (strain DSM 13744 / JCM 10971 / SI), this protein is Phosphoglucosamine mutase.